A 252-amino-acid polypeptide reads, in one-letter code: 1-(5-phosphoribosyl)-5-[(5-phosphoribosylamino)methylideneamino] imidazole-4-carboxamide isomerase (252 aa).

The active-site Proton acceptor is the Asp10. Asp129 functions as the Proton donor in the catalytic mechanism.

The protein belongs to the HisA/HisF family.

It localises to the cytoplasm. It carries out the reaction 1-(5-phospho-beta-D-ribosyl)-5-[(5-phospho-beta-D-ribosylamino)methylideneamino]imidazole-4-carboxamide = 5-[(5-phospho-1-deoxy-D-ribulos-1-ylimino)methylamino]-1-(5-phospho-beta-D-ribosyl)imidazole-4-carboxamide. It participates in amino-acid biosynthesis; L-histidine biosynthesis; L-histidine from 5-phospho-alpha-D-ribose 1-diphosphate: step 4/9. The chain is 1-(5-phosphoribosyl)-5-[(5-phosphoribosylamino)methylideneamino] imidazole-4-carboxamide isomerase from Frankia casuarinae (strain DSM 45818 / CECT 9043 / HFP020203 / CcI3).